The primary structure comprises 277 residues: Shikimate dehydrogenase (NADP(+)) (277 aa).

Residues 15 to 17 and Thr-62 each bind shikimate; that span reads SKS. The Proton acceptor role is filled by Lys-66. Glu-78 is a binding site for NADP(+). 2 residues coordinate shikimate: Asn-87 and Asp-103. NADP(+)-binding positions include 127-131, 151-156, and Gly-238; these read GAGGA and NRTHEK.

This sequence belongs to the shikimate dehydrogenase family. As to quaternary structure, homodimer.

The enzyme catalyses shikimate + NADP(+) = 3-dehydroshikimate + NADPH + H(+). It participates in metabolic intermediate biosynthesis; chorismate biosynthesis; chorismate from D-erythrose 4-phosphate and phosphoenolpyruvate: step 4/7. Functionally, involved in the biosynthesis of the chorismate, which leads to the biosynthesis of aromatic amino acids. Catalyzes the reversible NADPH linked reduction of 3-dehydroshikimate (DHSA) to yield shikimate (SA). The protein is Shikimate dehydrogenase (NADP(+)) of Shewanella frigidimarina (strain NCIMB 400).